Here is a 442-residue protein sequence, read N- to C-terminus: GTPase Der (442 aa).

2 EngA-type G domains span residues 2–168 (ATVL…EEAG) and 182–356 (LKVA…EKID). GTP is bound by residues 8–15 (GRPNVGKS), 55–59 (DTCGL), 118–121 (NKVE), 188–195 (GKPNAGKS), 235–239 (DTAGM), and 301–304 (NKSD). The region spanning 357 to 442 (LRIPTGLLNN…PIFIKLRRKK (86 aa)) is the KH-like domain.

Belongs to the TRAFAC class TrmE-Era-EngA-EngB-Septin-like GTPase superfamily. EngA (Der) GTPase family. Associates with the 50S ribosomal subunit.

GTPase that plays an essential role in the late steps of ribosome biogenesis. This is GTPase Der from Kosmotoga olearia (strain ATCC BAA-1733 / DSM 21960 / TBF 19.5.1).